A 520-amino-acid chain; its full sequence is Putative lipase ATG15 (520 aa).

Residues 1 to 14 (MLHKSPSRKRFASP) are Cytoplasmic-facing. Residues 15–35 (LHLGCILTLTVLCLIAYYFAL) form a helical; Signal-anchor for type II membrane protein membrane-spanning segment. Over 36 to 520 (PDYLSVGKSS…WLGFCTKYEL (485 aa)) the chain is Lumenal. Residues Asn173, Asn202, and Asn208 are each glycosylated (N-linked (GlcNAc...) asparagine). Ser332 functions as the Charge relay system in the catalytic mechanism.

Belongs to the AB hydrolase superfamily. Lipase family. As to quaternary structure, binds to both phosphatidylinositol (PI) and phosphatidylinositol 3,5-bisphosphate (PIP2). Post-translationally, glycosylated.

The protein resides in the endosome. It localises to the multivesicular body membrane. It is found in the prevacuolar compartment membrane. It carries out the reaction a triacylglycerol + H2O = a diacylglycerol + a fatty acid + H(+). Its function is as follows. Lipase which is essential for lysis of subvacuolar cytoplasm to vacuole targeted bodies and intravacuolar autophagic bodies. Involved in the lysis of intravacuolar multivesicular body (MVB) vesicles. The intravacuolar membrane disintegration by ATG15 is critical to life span extension. This is Putative lipase ATG15 (ATG15) from Saccharomyces cerevisiae (strain ATCC 204508 / S288c) (Baker's yeast).